The sequence spans 726 residues: MTQQPFQLPHFYLPHPARLNPHLDEARAHSTTWAREMGMLEGSGVWEQSDLEAHDYGLLCAYTHPDCDGPALSLITDWYVWVFFFDDHFLEKYKRSQDRLAGKAHLDRLPLFMPLDDAAGMPEPRNPVEAGLADLWTRTVPAMSADWRRRFAVATEHLLNESMWELSNINEGRVANPVEYIEMRRKVGGAPWSAGLVEYATAEVPAAVAGTRPLRVLMETFSDAVHLRNDLFSYQREVEDEGELSNGVLVLETFFGCTTQEAADLVNDVLTSRLHQFEHTAFTEVPAVALEKGLTPLEVAAVGAYTKGLQDWQSGGHEWHMRSSRYMNKGERPLAGWQALTGPGTSAADVGALLADAVAQRARSYTYVPFQKVGPSVIPDIRMPYPLELSPALDGARRHLSEWCREMGILSEGVWDEDKLESCDLPLCAAGLDPDATQDQLDLASGWLAFGTYGDDYYPLVYGHRRDLAAARLTTTRLSDCMPLDGEPVPPPGNAMERSLIDLWVRTTAGMTPEERRPLKKAVDDMTEAWLWELSNQIQNRVPDPVDYLEMRRATFGSDLTLGLCRAGHGPAVPPEVYRSGPVRSLENAAIDYACLLNDVFSYQKEIEYEGEIHNAVLVVQNFFGVDYPAALGVVQDLMNQRMRQFEHVVAHELPVVYDDFQLSEEARTVMRGYVTDLQNWMAGILNWHRNVPRYKAEYLAGRTHGFLPDRIPAPPVPRSSPALTH.

The interval 2-354 is germacradienol/germacrene D synthase; the sequence is TQQPFQLPHF…TSAADVGALL (353 aa). Mg(2+) is bound by residues D86, E91, N267, T271, Q276, D455, N598, S602, and E606. Positions 86 to 91 match the DDXXD motif 1; degenerate motif; it reads DDHFLE. Positions 355-726 are geosmin synthase; the sequence is ADAVAQRARS…VPRSSPALTH (372 aa). The DDXXD motif 2; degenerate signature appears at 455–459; the sequence is DDYYP.

Belongs to the terpene synthase family. Requires Mg(2+) as cofactor.

It catalyses the reaction (2E,6E)-farnesyl diphosphate + H2O = (1E,4S,5E,7R)-germacra-1(10),5-dien-11-ol + diphosphate. It carries out the reaction (1E,4S,5E,7R)-germacra-1(10),5-dien-11-ol + H2O = (-)-geosmin + acetone. The enzyme catalyses (2E,6E)-farnesyl diphosphate = (-)-germacrene D + diphosphate. It functions in the pathway secondary metabolite biosynthesis; geosmin biosynthesis. It participates in sesquiterpene biosynthesis; germacradienol biosynthesis; germacradienol from farnesyl diphosphate: step 1/1. The protein operates within sesquiterpene biosynthesis; germacrene D biosynthesis; germacrene D from farnesyl diphosphate: step 1/1. Functionally, tow-domain protein where the N-terminal domain catalyzes the cyclization of farnesyl diphosphate (FPP) to a 85:15 mixture of the sesquiterpene alcohol germacradienol and the sesquiterpene hydrocarbon germacrene D. The C-terminal domain partially converts the germacradienol formed into geosmin, the characteristic odoriferous ('earthy aroma') constituent of Streptomyces species. The protein is Germacradienol/geosmin synthase (cyc2) of Streptomyces coelicolor (strain ATCC BAA-471 / A3(2) / M145).